Consider the following 308-residue polypeptide: Olfactory receptor 8D1 (308 aa).

Residues 1 to 25 (MTMENYSMAAQFVLDGLTQQAELQL) lie on the Extracellular side of the membrane. Residue Asn5 is glycosylated (N-linked (GlcNAc...) asparagine). A helical membrane pass occupies residues 26-46 (PLFLLFLGIYVVTVVGNLGMI). The Cytoplasmic segment spans residues 47–54 (LLIAVSPL). The chain crosses the membrane as a helical span at residues 55–75 (LHTPMYYFLSSLSFVDFCYSS). Topologically, residues 76–99 (VITPKMLVNFLGKKNTILYSECMV) are extracellular. Cys97 and Cys189 are oxidised to a cystine. A helical transmembrane segment spans residues 100–120 (QLFFFVVFVVAEGYLLTAMAY). Residues 121-139 (DRYVAICSPLLYNAIMSSW) lie on the Cytoplasmic side of the membrane. The helical transmembrane segment at 140 to 160 (VCSLLVLAAFFLGFLSALTHT) threads the bilayer. Topologically, residues 161–197 (SAMMKLSFCKSHIINHYFCDVLPLLNLSCSNTHLNEL) are extracellular. Residue Asn186 is glycosylated (N-linked (GlcNAc...) asparagine). Residues 198–217 (LLFIIAGFNTLVPTLAVAVS) form a helical membrane-spanning segment. The Cytoplasmic segment spans residues 218-237 (YAFILYSILHIRSSEGRSKA). The helical transmembrane segment at 238–258 (FGTCSSHLMAVVIFFGSITFM) threads the bilayer. The Extracellular portion of the chain corresponds to 259–271 (YFKPPSSNSLDQE). Residues 272–292 (KVSSVFYTTVIPMLNPLIYSL) traverse the membrane as a helical segment. Topologically, residues 293-308 (RNKDVKKALRKVLVGK) are cytoplasmic.

It belongs to the G-protein coupled receptor 1 family. As to expression, expressed in the tongue.

Its subcellular location is the cell membrane. Its function is as follows. Odorant receptor (Potential). May be involved in taste perception. In Homo sapiens (Human), this protein is Olfactory receptor 8D1 (OR8D1).